A 502-amino-acid polypeptide reads, in one-letter code: Protein O-glucosyltransferase 2 (502 aa).

Positions 1 to 19 are cleaved as a signal peptide; it reads MFGTLLLYCFFLATVPALA. The stretch at 24–130 is one Filamin repeat; it reads ERQLSPEKSE…VAKSPYILKG (107 aa). 2 N-linked (GlcNAc...) asparagine glycosylation sites follow: asparagine 302 and asparagine 414. Residues 499–502 carry the Prevents secretion from ER motif; sequence KDEL.

It belongs to the KDELC family. Post-translationally, N-glycosylated.

It is found in the endoplasmic reticulum lumen. The enzyme catalyses L-seryl-[EGF-like domain protein] + UDP-alpha-D-glucose = 3-O-(beta-D-glucosyl)-L-seryl-[EGF-like domain protein] + UDP + H(+). It carries out the reaction L-seryl-[EGF-like domain protein] + UDP-alpha-D-xylose = 3-O-(beta-D-xylosyl)-L-seryl-[EGF-like domain protein] + UDP + H(+). It functions in the pathway protein modification; protein glycosylation. Its function is as follows. Protein glucosyltransferase that catalyzes the transfer of glucose from UDP-glucose to a serine residue within the consensus sequence peptide C-X-N-T-X-G-S-F-X-C. Can also catalyze the transfer of xylose from UDP-xylose but less efficiently. Specifically targets extracellular EGF repeats of proteins such as NOTCH1, NOTCH3, FBN1, FBN2 and LTBP1. May regulate the transport of NOTCH1 and NOTCH3 to the plasma membrane and thereby the Notch signaling pathway. In Homo sapiens (Human), this protein is Protein O-glucosyltransferase 2.